The following is a 231-amino-acid chain: LexA repressor (231 aa).

Positions 26–46 (FDEMKLALDLRSKSGIHRLIT) form a DNA-binding region, H-T-H motif. Positions 79–98 (VGFQPRVIDGDRPDRPRPAN) are disordered. Positions 86 to 95 (IDGDRPDRPR) are enriched in basic and acidic residues. Catalysis depends on for autocatalytic cleavage activity residues serine 152 and lysine 190.

Belongs to the peptidase S24 family. Homodimer.

It carries out the reaction Hydrolysis of Ala-|-Gly bond in repressor LexA.. Functionally, represses a number of genes involved in the response to DNA damage (SOS response), including recA and lexA. In the presence of single-stranded DNA, RecA interacts with LexA causing an autocatalytic cleavage which disrupts the DNA-binding part of LexA, leading to derepression of the SOS regulon and eventually DNA repair. The polypeptide is LexA repressor (Ruegeria pomeroyi (strain ATCC 700808 / DSM 15171 / DSS-3) (Silicibacter pomeroyi)).